A 25-amino-acid chain; its full sequence is Antimicrobial peptide 3 (25 aa).

Skin.

It is found in the secreted. Its function is as follows. Has antibacterial activity against Gram-positive bacterium S.aureus and Gram-negative bacterium E.coli, when in combination with XT1 and XT6. The polypeptide is Antimicrobial peptide 3 (Xenopus tropicalis (Western clawed frog)).